Consider the following 145-residue polypeptide: ATP synthase epsilon chain (145 aa).

The protein belongs to the ATPase epsilon chain family. F-type ATPases have 2 components, CF(1) - the catalytic core - and CF(0) - the membrane proton channel. CF(1) has five subunits: alpha(3), beta(3), gamma(1), delta(1), epsilon(1). CF(0) has three main subunits: a, b and c.

It localises to the cell inner membrane. Its function is as follows. Produces ATP from ADP in the presence of a proton gradient across the membrane. This chain is ATP synthase epsilon chain, found in Francisella tularensis subsp. holarctica (strain FTNF002-00 / FTA).